Here is a 169-residue protein sequence, read N- to C-terminus: Transcription regulatory protein SNF11 (169 aa).

Residues 1-24 (MSSEIAYSNTNTNTENENRNTGAG) are disordered. An N-acetylserine modification is found at serine 2. A compositionally biased stretch (low complexity) spans 9–21 (NTNTNTENENRNT). A run of 8 repeats spans residues 28-31 (NTNA), 32-35 (NANA), 36-39 (NATA), 40-43 (NATA), 44-47 (NATA), 48-51 (NATA), 76-80 (LLARV), and 160-165 (LLLARV). The interval 28–51 (NTNANANANATANATANATANATA) is 6 X 4 AA tandem repeats of N-[AT]-[NT]-A. The segment at 76-165 (LLARVIQMNN…SKLYLLLARV (90 aa)) is 2 X 5 AA repeats of L-L-A-R-V.

In terms of assembly, component of the SWI/SNF global transcription activator complex. The 1.14 MDa SWI/SNF complex is composed of 11 different subunits: one copy each of SWI1, SNF2/SWI2, SNF5, SNF12/SWP73, ARP7/SWP61, ARP9/SWP59; two copies each of SWI3, SNF6, SNF11, SWP82; and three copies of TAF14/SWP29.

The protein resides in the nucleus. In terms of biological role, involved in transcriptional activation. Component of the SWI/SNF complex, an ATP-dependent chromatin remodeling complex, which is required for the positive and negative regulation of gene expression of a large number of genes. It changes chromatin structure by altering DNA-histone contacts within a nucleosome, leading eventually to a change in nucleosome position, thus facilitating or repressing binding of gene-specific transcription factors. This is Transcription regulatory protein SNF11 (SNF11) from Saccharomyces cerevisiae (strain ATCC 204508 / S288c) (Baker's yeast).